A 240-amino-acid chain; its full sequence is Insulin-like growth factor-binding protein 6 (240 aa).

The N-terminal stretch at 1-27 (MTPHRLLPPLLLLLALLLAASPGGALA) is a signal peptide. The IGFBP N-terminal domain occupies 28 to 107 (RCPGCGQGVQ…LLGRGRCLPA (80 aa)). 5 cysteine pairs are disulfide-bonded: C29–C32, C40–C44, C57–C63, C71–C84, and C78–C104. The tract at residues 109 to 160 (APAVAEENPKESKPQAGTARPQDVNRRDQQRNPGTSTTPSQPNSAGVQDTEM) is disordered. Residue T126 is glycosylated (O-linked (HexNAc...) threonine). Residues 139–155 (RNPGTSTTPSQPNSAGV) are compositionally biased toward polar residues. Residue S144 is glycosylated (O-linked (HexNAc...) serine). O-linked (HexNAc...) threonine glycans are attached at residues T145 and T146. S152 is a glycosylation site (O-linked (HexNAc...) serine). A Thyroglobulin type-1 domain is found at 160 to 234 (MGPCRRHLDS…SPDGNGSSSC (75 aa)). Disulfide bonds link C163–C190, C201–C212, and C214–C234. The interval 217–240 (RMGKSLPGSPDGNGSSSCPTGSSG) is disordered. The segment covering 228–240 (GNGSSSCPTGSSG) has biased composition (polar residues).

As to quaternary structure, interacts (via C-terminal domain) with PHB2. O-linked glycans consist of hexose (probably Gal), N-acetylhexosamine (probably GalNAc) and sialic acid residues. O-glycosylated with core 1 or possibly core 8 glycans. O-glycosylated on one site only in the region AA 143-168 in cerebrospinal fluid.

It localises to the secreted. IGF-binding proteins prolong the half-life of the IGFs and have been shown to either inhibit or stimulate the growth promoting effects of the IGFs on cell culture. They alter the interaction of IGFs with their cell surface receptors. Activates the MAPK signaling pathway and induces cell migration. The protein is Insulin-like growth factor-binding protein 6 of Homo sapiens (Human).